The chain runs to 21 residues: Dahlein-5.6 (21 aa).

As to expression, expressed by the skin dorsal glands.

Its subcellular location is the secreted. Functionally, has no antimicrobial activity. Strongly inhibits the formation of NO by neuronal nitric oxide synthase at micromolar concentrations. This is Dahlein-5.6 from Ranoidea dahlii (Dahl's aquatic frog).